Reading from the N-terminus, the 149-residue chain is Nucleoside diphosphate kinase (149 aa).

Residues Lys9, Phe57, Arg85, Thr91, Arg102, and Asn112 each coordinate ATP. His115 (pros-phosphohistidine intermediate) is an active-site residue.

The protein belongs to the NDK family. Homotetramer. Mg(2+) is required as a cofactor.

It localises to the cytoplasm. The catalysed reaction is a 2'-deoxyribonucleoside 5'-diphosphate + ATP = a 2'-deoxyribonucleoside 5'-triphosphate + ADP. The enzyme catalyses a ribonucleoside 5'-diphosphate + ATP = a ribonucleoside 5'-triphosphate + ADP. Its function is as follows. Major role in the synthesis of nucleoside triphosphates other than ATP. The ATP gamma phosphate is transferred to the NDP beta phosphate via a ping-pong mechanism, using a phosphorylated active-site intermediate. The polypeptide is Nucleoside diphosphate kinase (Nostoc sp. (strain PCC 7120 / SAG 25.82 / UTEX 2576)).